Consider the following 337-residue polypeptide: MVQWISPLDNSIVIASKVKILRNIKGIKFTKLLNEEEFNDLLSMVLGRLKEIDILDKCYVVKLKDGEEKIIDYYKENFGLIKYFENKDNLIFIMNKNGEFNILLNEEEHIGIECTNSGLSLREVYSKVDKLDDLIEEKIHYSFDSELGYLTSNIKNLGTALRTKVFIHLPLLSSNNLIRIIKNALKEEGITLKSIYNSGNKDVGNIYEVSNIKTLGMSEKDILDSLISITNKLILREKNQRDNLSKDEYIELKDDILRALGVLRNTYSIDRDEALKYLSYVRLGVELGIIEDLTLKPVNSAMIEIQPDMINNSSIKRRDIQSLKIERAKIIRNALNT.

The Phosphagen kinase C-terminal domain maps to isoleucine 12–glutamine 240. ATP is bound by residues alanine 15–lysine 19, arginine 162–phenylalanine 166, and lysine 193–serine 198.

It belongs to the ATP:guanido phosphotransferase family.

The catalysed reaction is L-arginyl-[protein] + ATP = N(omega)-phospho-L-arginyl-[protein] + ADP + H(+). Its function is as follows. Catalyzes the specific phosphorylation of arginine residues in proteins. In Clostridium perfringens (strain 13 / Type A), this protein is Protein-arginine kinase.